A 342-amino-acid polypeptide reads, in one-letter code: Thymidylate synthase (342 aa).

DUMP-binding positions include Arg31 and 156–157; that span reads RR. The active-site Nucleophile is the Cys176. DUMP-binding positions include 196–199, Asn207, and 237–239; these read RSGD and HVY. Position 199 (Asp199) interacts with (6R)-5,10-methylene-5,6,7,8-tetrahydrofolate. Ala341 lines the (6R)-5,10-methylene-5,6,7,8-tetrahydrofolate pocket.

The protein belongs to the thymidylate synthase family. Bacterial-type ThyA subfamily. As to quaternary structure, homodimer.

Its subcellular location is the cytoplasm. It carries out the reaction dUMP + (6R)-5,10-methylene-5,6,7,8-tetrahydrofolate = 7,8-dihydrofolate + dTMP. It functions in the pathway pyrimidine metabolism; dTTP biosynthesis. In terms of biological role, catalyzes the reductive methylation of 2'-deoxyuridine-5'-monophosphate (dUMP) to 2'-deoxythymidine-5'-monophosphate (dTMP) while utilizing 5,10-methylenetetrahydrofolate (mTHF) as the methyl donor and reductant in the reaction, yielding dihydrofolate (DHF) as a by-product. This enzymatic reaction provides an intracellular de novo source of dTMP, an essential precursor for DNA biosynthesis. This is Thymidylate synthase from Haloferax volcanii (Halobacterium volcanii).